Reading from the N-terminus, the 119-residue chain is Protein RALF-like 22 (119 aa).

The first 23 residues, 1–23 (MTNTRAIYAVIAILAIVISAVES), serve as a signal peptide directing secretion. A propeptide spans 24-70 (TGDFGDSLDFVRAGSSSLFSGCTGSIAECIAEEEEMEFDSDISRRIL) (removed in mature form). Disulfide bonds link C88–C98 and C111–C117.

Belongs to the plant rapid alkalinization factor (RALF) family. In terms of processing, proteolytically cleaved, probably by S1P, a subtilisin-like serine protease (subtilase).

It is found in the secreted. Functionally, cell signaling peptide that may regulate plant stress, growth, and development. Mediates a rapid alkalinization of extracellular space by mediating a transient increase in the cytoplasmic Ca(2+) concentration leading to a calcium-dependent signaling events through a cell surface receptor and a concomitant activation of some intracellular mitogen-activated protein kinases. This is Protein RALF-like 22 (RALFL22) from Arabidopsis thaliana (Mouse-ear cress).